A 94-amino-acid polypeptide reads, in one-letter code: Pyrimidine/purine nucleoside phosphorylase (94 aa).

Belongs to the nucleoside phosphorylase PpnP family.

It catalyses the reaction a purine D-ribonucleoside + phosphate = a purine nucleobase + alpha-D-ribose 1-phosphate. It carries out the reaction adenosine + phosphate = alpha-D-ribose 1-phosphate + adenine. The enzyme catalyses cytidine + phosphate = cytosine + alpha-D-ribose 1-phosphate. The catalysed reaction is guanosine + phosphate = alpha-D-ribose 1-phosphate + guanine. It catalyses the reaction inosine + phosphate = alpha-D-ribose 1-phosphate + hypoxanthine. It carries out the reaction thymidine + phosphate = 2-deoxy-alpha-D-ribose 1-phosphate + thymine. The enzyme catalyses uridine + phosphate = alpha-D-ribose 1-phosphate + uracil. The catalysed reaction is xanthosine + phosphate = alpha-D-ribose 1-phosphate + xanthine. Functionally, catalyzes the phosphorolysis of diverse nucleosides, yielding D-ribose 1-phosphate and the respective free bases. Can use uridine, adenosine, guanosine, cytidine, thymidine, inosine and xanthosine as substrates. Also catalyzes the reverse reactions. In Pseudomonas putida (strain ATCC 700007 / DSM 6899 / JCM 31910 / BCRC 17059 / LMG 24140 / F1), this protein is Pyrimidine/purine nucleoside phosphorylase.